Consider the following 444-residue polypeptide: Transcription activator AKTR-1 (444 aa).

Positions 16–43 (CDFCTQSKLRCNKNKPSCRRCTIQQQPC) form a DNA-binding region, zn(2)-C6 fungal-type. The tract at residues 49 to 87 (RRTGRPPKHPRKANDCQEANGQHGEQDPVTSTPGGSCQQ) is disordered. The span at 50–59 (RTGRPPKHPR) shows a compositional bias: basic residues. Polar residues predominate over residues 76–87 (PVTSTPGGSCQQ).

It localises to the nucleus. Functionally, transcription factor that regulates the expression of the gene clusters that mediate the biosynthesis of the host-selective toxins (HSTs) AK-toxins responsible for Japanese pear black spot disease by the Japanese pear pathotype. AK-toxins are esters of 9,10-epoxy 8-hydroxy 9-methyldecatrienoic acid (EDA). On cellular level, AK-toxins affect plasma membrane of susceptible cells and cause a sudden increase in loss of K(+) after a few minutes of toxin treatment. The chain is Transcription activator AKTR-1 from Alternaria alternata (Alternaria rot fungus).